We begin with the raw amino-acid sequence, 119 residues long: Non-specific lipid-transfer protein 11 (119 aa).

The signal sequence occupies residues 1 to 28 (MRNITTTTRKMLLLVITILLGIAYHGEA). Intrachain disulfides connect Cys-31–Cys-78, Cys-41–Cys-55, Cys-56–Cys-101, and Cys-76–Cys-115.

The protein belongs to the plant LTP family.

Its function is as follows. Plant non-specific lipid-transfer proteins transfer phospholipids as well as galactolipids across membranes. May play a role in wax or cutin deposition in the cell walls of expanding epidermal cells and certain secretory tissues. The chain is Non-specific lipid-transfer protein 11 (LTP11) from Arabidopsis thaliana (Mouse-ear cress).